Reading from the N-terminus, the 365-residue chain is Aminomethyltransferase (365 aa).

It belongs to the GcvT family. In terms of assembly, the glycine cleavage system is composed of four proteins: P, T, L and H.

It carries out the reaction N(6)-[(R)-S(8)-aminomethyldihydrolipoyl]-L-lysyl-[protein] + (6S)-5,6,7,8-tetrahydrofolate = N(6)-[(R)-dihydrolipoyl]-L-lysyl-[protein] + (6R)-5,10-methylene-5,6,7,8-tetrahydrofolate + NH4(+). Functionally, the glycine cleavage system catalyzes the degradation of glycine. This Yersinia pestis bv. Antiqua (strain Antiqua) protein is Aminomethyltransferase.